We begin with the raw amino-acid sequence, 93 residues long: Progonadoliberin-2 (93 aa).

An N-terminal signal peptide occupies residues 1 to 24; sequence MACQRHLLFLLLVLFAVSTQLSHG. Position 25 is a pyrrolidone carboxylic acid (glutamine 25). Position 34 is a glycine amide (glycine 34).

The protein belongs to the GnRH family. As to expression, midbrain and hindbrain.

The protein localises to the secreted. Its function is as follows. Stimulates the secretion of gonadotropins. The protein is Progonadoliberin-2 (gnrh2) of Aquarana catesbeiana (American bullfrog).